A 421-amino-acid chain; its full sequence is Tyrosine--tRNA ligase (421 aa).

Tyr-42 contacts L-tyrosine. Residues 47–56 (CTAPSLHVGS) carry the 'HIGH' region motif. L-tyrosine-binding residues include Tyr-179 and Gln-183. Residues 239-243 (KMGKT) carry the 'KMSKS' region motif. Residue Lys-242 coordinates ATP. The S4 RNA-binding domain maps to 354 to 419 (LGILAAFAKA…RKKHVLLRLA (66 aa)).

It belongs to the class-I aminoacyl-tRNA synthetase family. TyrS type 1 subfamily. As to quaternary structure, homodimer.

The protein resides in the cytoplasm. The catalysed reaction is tRNA(Tyr) + L-tyrosine + ATP = L-tyrosyl-tRNA(Tyr) + AMP + diphosphate + H(+). Its function is as follows. Catalyzes the attachment of tyrosine to tRNA(Tyr) in a two-step reaction: tyrosine is first activated by ATP to form Tyr-AMP and then transferred to the acceptor end of tRNA(Tyr). In Beijerinckia indica subsp. indica (strain ATCC 9039 / DSM 1715 / NCIMB 8712), this protein is Tyrosine--tRNA ligase.